The primary structure comprises 121 residues: Large ribosomal subunit protein bL12 (121 aa).

This sequence belongs to the bacterial ribosomal protein bL12 family. As to quaternary structure, homodimer. Part of the ribosomal stalk of the 50S ribosomal subunit. Forms a multimeric L10(L12)X complex, where L10 forms an elongated spine to which 2 to 4 L12 dimers bind in a sequential fashion. Binds GTP-bound translation factors.

Its function is as follows. Forms part of the ribosomal stalk which helps the ribosome interact with GTP-bound translation factors. Is thus essential for accurate translation. The protein is Large ribosomal subunit protein bL12 of Tremblaya princeps.